The following is a 558-amino-acid chain: Membrane protein insertase YidC (558 aa).

The next 5 helical transmembrane spans lie at 3 to 23 (IKRTVLWVIFFMSAVMLFDNW), 364 to 384 (FVGNWGWAIVLLTLLIKAVFF), 438 to 458 (LPVVIQIPVFISLYWVLLASV), 477 to 497 (PYFILPVLMAVSMFVQTKLNP), and 508 to 528 (MMFMPIAFSVMFFFFPAGLVL).

The protein belongs to the OXA1/ALB3/YidC family. Type 1 subfamily. In terms of assembly, interacts with the Sec translocase complex via SecD. Specifically interacts with transmembrane segments of nascent integral membrane proteins during membrane integration.

It is found in the cell inner membrane. Functionally, required for the insertion and/or proper folding and/or complex formation of integral membrane proteins into the membrane. Involved in integration of membrane proteins that insert both dependently and independently of the Sec translocase complex, as well as at least some lipoproteins. Aids folding of multispanning membrane proteins. In Burkholderia pseudomallei (strain K96243), this protein is Membrane protein insertase YidC.